The following is a 170-amino-acid chain: Peptide deformylase (170 aa).

Fe cation-binding residues include cysteine 94 and histidine 136. Glutamate 137 is a catalytic residue. Histidine 140 provides a ligand contact to Fe cation.

The protein belongs to the polypeptide deformylase family. Fe(2+) serves as cofactor.

It carries out the reaction N-terminal N-formyl-L-methionyl-[peptide] + H2O = N-terminal L-methionyl-[peptide] + formate. Its function is as follows. Removes the formyl group from the N-terminal Met of newly synthesized proteins. Requires at least a dipeptide for an efficient rate of reaction. N-terminal L-methionine is a prerequisite for activity but the enzyme has broad specificity at other positions. This Stenotrophomonas maltophilia (strain R551-3) protein is Peptide deformylase.